Reading from the N-terminus, the 62-residue chain is Large ribosomal subunit protein bL28 (62 aa).

It belongs to the bacterial ribosomal protein bL28 family.

The chain is Large ribosomal subunit protein bL28 from Caldicellulosiruptor bescii (strain ATCC BAA-1888 / DSM 6725 / KCTC 15123 / Z-1320) (Anaerocellum thermophilum).